Here is a 92-residue protein sequence, read N- to C-terminus: Small ribosomal subunit protein uS19c (92 aa).

This sequence belongs to the universal ribosomal protein uS19 family.

Its subcellular location is the plastid. It localises to the chloroplast. Protein S19 forms a complex with S13 that binds strongly to the 16S ribosomal RNA. This Piper cenocladum (Ant piper) protein is Small ribosomal subunit protein uS19c.